The sequence spans 483 residues: Regulatory protein ViaA (483 aa).

This sequence belongs to the ViaA family. Homodimer. Interacts with RavA.

Its subcellular location is the cytoplasm. Functionally, component of the RavA-ViaA chaperone complex, which may act on the membrane to optimize the function of some of the respiratory chains. ViaA stimulates the ATPase activity of RavA. This chain is Regulatory protein ViaA, found in Escherichia coli (strain 55989 / EAEC).